A 513-amino-acid chain; its full sequence is Sphingosine-1-phosphate transporter SPNS2 (513 aa).

A run of 11 helical transmembrane segments spans residues 102–122 (GLLQ…FGYL), 130–150 (VILS…SFIP), 163–183 (LVGI…GDLF), 190–210 (LMLS…YITG), 222–242 (WALR…LIFV), 276–296 (LATS…PLYL), 320–340 (LIFG…GAGA), 354–374 (LVCA…FVAA), 378–398 (IIAA…NWAI), 422–442 (TSHL…SDLI), and 463–483 (LCPF…LFFL).

Belongs to the major facilitator superfamily. Spinster (TC 2.A.1.49) family.

The protein resides in the cell membrane. It localises to the endosome membrane. The enzyme catalyses sphing-4-enine 1-phosphate(in) = sphing-4-enine 1-phosphate(out). It catalyses the reaction sphinganine 1-phosphate(in) = sphinganine 1-phosphate(out). Its function is as follows. Lipid transporter that specifically mediates export of sphingosine-1-phosphate (sphing-4-enine 1-phosphate, S1P) and sphinganine-1-phosphate. This chain is Sphingosine-1-phosphate transporter SPNS2 (spns2), found in Xenopus tropicalis (Western clawed frog).